Consider the following 344-residue polypeptide: Biotin synthase (344 aa).

Residues 40–267 (AQVQVSTLLS…KSMVRLSAGR (228 aa)) form the Radical SAM core domain. Cysteine 55, cysteine 59, and cysteine 62 together coordinate [4Fe-4S] cluster. Residues cysteine 99, cysteine 130, cysteine 190, and arginine 262 each contribute to the [2Fe-2S] cluster site.

The protein belongs to the radical SAM superfamily. Biotin synthase family. In terms of assembly, homodimer. The cofactor is [4Fe-4S] cluster. [2Fe-2S] cluster serves as cofactor.

The enzyme catalyses (4R,5S)-dethiobiotin + (sulfur carrier)-SH + 2 reduced [2Fe-2S]-[ferredoxin] + 2 S-adenosyl-L-methionine = (sulfur carrier)-H + biotin + 2 5'-deoxyadenosine + 2 L-methionine + 2 oxidized [2Fe-2S]-[ferredoxin]. Its pathway is cofactor biosynthesis; biotin biosynthesis; biotin from 7,8-diaminononanoate: step 2/2. In terms of biological role, catalyzes the conversion of dethiobiotin (DTB) to biotin by the insertion of a sulfur atom into dethiobiotin via a radical-based mechanism. The sequence is that of Biotin synthase from Xanthomonas euvesicatoria pv. vesicatoria (strain 85-10) (Xanthomonas campestris pv. vesicatoria).